We begin with the raw amino-acid sequence, 1203 residues long: MEQAPNMAEPRGPVDHGVQIRFITEPVSGAEMGTLRRGGRRPAKDARASTYGVAVRVQGIAGQPFVVLNSGEKGGDSFGVQIKGANDQGASGALSSDLELPENPYSQVKGFPAPSQSSTSDEEPGAYWNGKLLRSHSQASLAGPGPVDPSNRSNSMLELAPKVASPGSTIDTAPLSSVDSLINKFDSQLGGQARGRTGRRTRMLPPEQRKRSKSLDSRLPRDTFEERERQSTNHWTSSTKYDNHVGTSKQPAQSQNLSPLSGFSRSRQTQDWVLQSFEEPRRSAQDPTMLQFKSTPDLLRDQQEAAPPGSVDHMKATIYGILREGSSESETSVRRKVSLVLEKMQPLVMVSSGSTKAVAGQGELTRKVEELQRKLDEEVKKRQKLEPSQVGLERQLEEKTEECSRLQELLERRKGEAQQSNKELQNMKRLLDQGEDLRHGLETQVMELQNKLKHVQGPEPAKEVLLKDLLETRELLEEVLEGKQRVEEQLRLRERELTALKGALKEEVASRDQEVEHVRQQYQRDTEQLRRSMQDATQDHAVLEAERQKMSALVRGLQRELEETSEETGHWQSMFQKNKEDLRATKQELLQLRMEKEEMEEELGEKIEVLQRELEQARASAGDTRQVEVLKKELLRTQEELKELQAERQSQEVAGRHRDRELEKQLAVLRVEADRGRELEEQNLQLQKTLQQLRQDCEEASKAKMVAEAEATVLGQRRAAVETTLRETQEENDEFRRRILGLEQQLKETRGLVDGGEAVEARLRDKLQRLEAEKQQLEEALNASQEEEGSLAAAKRALEARLEEAQRGLARLGQEQQTLNRALEEEGKQREVLRRGKAELEEQKRLLDRTVDRLNKELEKIGEDSKQALQQLQAQLEDYKEKARREVADAQRQAKDWASEAEKTSGGLSRLQDEIQRLRQALQASQAERDTARLDKELLAQRLQGLEQEAENKKRSQDDRARQLKGLEEKVSRLETELDEEKNTVELLTDRVNRGRDQVDQLRTELMQERSARQDLECDKISLERQNKDLKTRLASSEGFQKPSASLSQLESQNQLLQERLQAEEREKTVLQSTNRKLERKVKELSIQIEDERQHVNDQKDQLSLRVKALKRQVDEAEEEIERLDGLRKKAQREVEEQHEVNEQLQARIKSLEKDSWRKASRSAAESALKNEGLSSDEEFDSVYDPSSIASLLTESNLQTSSC.

The tract at residues 7-357 is head; sequence MAEPRGPVDH…VMVSSGSTKA (351 aa). A disordered region spans residues 25–48; it reads EPVSGAEMGTLRRGGRRPAKDARA. The ZIM signature appears at 48–62; that stretch reads ASTYGVAVRVQGIAG. The tract at residues 54-67 is interaction with TJP1/ZO1; sequence AVRVQGIAGQPFVV. Residues 89 to 127 are disordered; sequence GASGALSSDLELPENPYSQVKGFPAPSQSSTSDEEPGAY. A phosphoserine mark is found at S95, S96, S135, S137, S140, S155, S165, S214, S217, S258, S276, S338, and S351. Positions 186–266 are disordered; it reads DSQLGGQARG…LSPLSGFSRS (81 aa). Basic and acidic residues predominate over residues 207–231; that stretch reads EQRKRSKSLDSRLPRDTFEERERQS. Residues 232–266 show a composition bias toward polar residues; that stretch reads TNHWTSSTKYDNHVGTSKQPAQSQNLSPLSGFSRS. A coiled-coil region spans residues 358-1160; it reads VAGQGELTRK…SLEKDSWRKA (803 aa). At K579 the chain carries N6-acetyllysine. At T712 the chain carries Phosphothreonine. 2 disordered regions span residues 1034–1053 and 1154–1181; these read LASS…LESQ and KDSW…EEFD. Residues 1044–1053 are compositionally biased toward low complexity; that stretch reads SASLSQLESQ. Residues 1161–1203 form a tail region; it reads SRSAAESALKNEGLSSDEEFDSVYDPSSIASLLTESNLQTSSC. A phosphoserine mark is found at S1175, S1176, and S1182.

The protein belongs to the cingulin family. In terms of assembly, homodimer. Interacts with TJP1/ZO1. Interacts with SPEF1. As to expression, localized on the cytoplasmic face of tight junctions of polarized epithelia and some endothelia. Expressed in pancreas, kidney, liver and lung, but not in skeletal muscle, placenta, brain or heart.

Its subcellular location is the cell junction. The protein localises to the tight junction. Probably plays a role in the formation and regulation of the tight junction (TJ) paracellular permeability barrier. The chain is Cingulin from Homo sapiens (Human).